The following is a 222-amino-acid chain: MEIDIKKIANMFDHTRLAPDATLAEIEKLCNEAKQYGFFSVCVNPYFIEAAKKFLSGSNVLVCTVIGFPLGQNTIETKVFETKDCVAKGAHEIDMVINISKLKEGDVDYCVNEINEIKKACNGALLKVIVETCLLTPKEKELAAQIVLKSNADYIKTSTGFSTAGATFEDIEIFKKVVGNNKLIKAAGGIKTTDDLLKMISLGANRIGTSRGVELIEGLKNK.

The active-site Proton donor/acceptor is D94. The active-site Schiff-base intermediate with acetaldehyde is the K156. The active-site Proton donor/acceptor is K185.

The protein belongs to the DeoC/FbaB aldolase family. DeoC type 1 subfamily.

It is found in the cytoplasm. It catalyses the reaction 2-deoxy-D-ribose 5-phosphate = D-glyceraldehyde 3-phosphate + acetaldehyde. The protein operates within carbohydrate degradation; 2-deoxy-D-ribose 1-phosphate degradation; D-glyceraldehyde 3-phosphate and acetaldehyde from 2-deoxy-alpha-D-ribose 1-phosphate: step 2/2. Functionally, catalyzes a reversible aldol reaction between acetaldehyde and D-glyceraldehyde 3-phosphate to generate 2-deoxy-D-ribose 5-phosphate. The polypeptide is Deoxyribose-phosphate aldolase (Malacoplasma penetrans (strain HF-2) (Mycoplasma penetrans)).